A 326-amino-acid polypeptide reads, in one-letter code: tRNA(Ile)-lysidine synthase (326 aa).

25 to 30 (SGGQDS) contacts ATP.

The protein belongs to the tRNA(Ile)-lysidine synthase family.

It localises to the cytoplasm. The catalysed reaction is cytidine(34) in tRNA(Ile2) + L-lysine + ATP = lysidine(34) in tRNA(Ile2) + AMP + diphosphate + H(+). Ligates lysine onto the cytidine present at position 34 of the AUA codon-specific tRNA(Ile) that contains the anticodon CAU, in an ATP-dependent manner. Cytidine is converted to lysidine, thus changing the amino acid specificity of the tRNA from methionine to isoleucine. In Prochlorococcus marinus (strain NATL1A), this protein is tRNA(Ile)-lysidine synthase.